The primary structure comprises 381 residues: Dual-specificity RNA methyltransferase RlmN (381 aa).

E95 serves as the catalytic Proton acceptor. The 239-residue stretch at 101–339 (DGRRGTLCVS…MTTVRTTRGD (239 aa)) folds into the Radical SAM core domain. The cysteines at positions 108 and 345 are disulfide-linked. [4Fe-4S] cluster is bound by residues C115, C119, and C122. Residues 169–170 (GE), S201, 223–225 (SLH), and N302 contribute to the S-adenosyl-L-methionine site. C345 serves as the catalytic S-methylcysteine intermediate.

The protein belongs to the radical SAM superfamily. RlmN family. It depends on [4Fe-4S] cluster as a cofactor.

It localises to the cytoplasm. The catalysed reaction is adenosine(2503) in 23S rRNA + 2 reduced [2Fe-2S]-[ferredoxin] + 2 S-adenosyl-L-methionine = 2-methyladenosine(2503) in 23S rRNA + 5'-deoxyadenosine + L-methionine + 2 oxidized [2Fe-2S]-[ferredoxin] + S-adenosyl-L-homocysteine. It carries out the reaction adenosine(37) in tRNA + 2 reduced [2Fe-2S]-[ferredoxin] + 2 S-adenosyl-L-methionine = 2-methyladenosine(37) in tRNA + 5'-deoxyadenosine + L-methionine + 2 oxidized [2Fe-2S]-[ferredoxin] + S-adenosyl-L-homocysteine. Specifically methylates position 2 of adenine 2503 in 23S rRNA and position 2 of adenine 37 in tRNAs. m2A2503 modification seems to play a crucial role in the proofreading step occurring at the peptidyl transferase center and thus would serve to optimize ribosomal fidelity. The sequence is that of Dual-specificity RNA methyltransferase RlmN from Alcanivorax borkumensis (strain ATCC 700651 / DSM 11573 / NCIMB 13689 / SK2).